We begin with the raw amino-acid sequence, 66 residues long: Toxin Boma6c (66 aa).

Positions 2-64 constitute an LCN-type CS-alpha/beta domain; it reads RDAYIAQNYN…VPIRIPGKCH (63 aa). 4 cysteine pairs are disulfide-bonded: Cys-12-Cys-63, Cys-16-Cys-36, Cys-22-Cys-46, and Cys-26-Cys-48.

This sequence belongs to the long (4 C-C) scorpion toxin superfamily. Sodium channel inhibitor family. Alpha subfamily. In terms of tissue distribution, expressed by the venom gland.

It is found in the secreted. Functionally, alpha toxins bind voltage-independently at site-3 of sodium channels (Nav) and inhibit the inactivation of the activated channels, thereby blocking neuronal transmission. The chain is Toxin Boma6c from Buthus occitanus mardochei (Moroccan scorpion).